A 466-amino-acid polypeptide reads, in one-letter code: Soluble pyridine nucleotide transhydrogenase (466 aa).

Residue 36–45 participates in FAD binding; the sequence is ERYHNVGGGC.

Belongs to the class-I pyridine nucleotide-disulfide oxidoreductase family. Requires FAD as cofactor.

It is found in the cytoplasm. It catalyses the reaction NAD(+) + NADPH = NADH + NADP(+). Conversion of NADPH, generated by peripheral catabolic pathways, to NADH, which can enter the respiratory chain for energy generation. This is Soluble pyridine nucleotide transhydrogenase from Salmonella paratyphi A (strain ATCC 9150 / SARB42).